Consider the following 152-residue polypeptide: UPF0266 membrane protein YobD (152 aa).

3 helical membrane-spanning segments follow: residues 6–26 (LVLI…QFIM), 45–65 (IDSV…VTNH), and 67–87 (ALIT…IFWI).

Belongs to the UPF0266 family.

It is found in the cell inner membrane. The sequence is that of UPF0266 membrane protein YobD from Shigella boydii serotype 18 (strain CDC 3083-94 / BS512).